A 258-amino-acid chain; its full sequence is Glutamate racemase (258 aa).

Substrate contacts are provided by residues aspartate 11–serine 12 and tyrosine 43–glycine 44. The Proton donor/acceptor role is filled by cysteine 74. Asparagine 75–threonine 76 provides a ligand contact to substrate. The active-site Proton donor/acceptor is cysteine 187. Threonine 188–histidine 189 contributes to the substrate binding site.

Belongs to the aspartate/glutamate racemases family.

The enzyme catalyses L-glutamate = D-glutamate. Its pathway is cell wall biogenesis; peptidoglycan biosynthesis. Provides the (R)-glutamate required for cell wall biosynthesis. The sequence is that of Glutamate racemase from Bifidobacterium adolescentis (strain ATCC 15703 / DSM 20083 / NCTC 11814 / E194a).